The following is a 335-amino-acid chain: Glucokinase (335 aa).

11 to 16 (ADIGGT) is an ATP binding site.

The protein belongs to the bacterial glucokinase family.

The protein resides in the cytoplasm. It carries out the reaction D-glucose + ATP = D-glucose 6-phosphate + ADP + H(+). This is Glucokinase from Xanthomonas campestris pv. campestris (strain 8004).